We begin with the raw amino-acid sequence, 135 residues long: Large ribosomal subunit protein uL16c (135 aa).

This sequence belongs to the universal ribosomal protein uL16 family. In terms of assembly, part of the 50S ribosomal subunit.

Its subcellular location is the plastid. The protein localises to the chloroplast. This Aethionema cordifolium (Lebanon stonecress) protein is Large ribosomal subunit protein uL16c.